Consider the following 95-residue polypeptide: UPF0358 protein GK1077 (95 aa).

Belongs to the UPF0358 family.

The chain is UPF0358 protein GK1077 from Geobacillus kaustophilus (strain HTA426).